We begin with the raw amino-acid sequence, 2435 residues long: Highly reducing polyketide synthase ATR6 (2435 aa).

The 433-residue stretch at 18–450 (AEPIAIVSAA…GSNAHVVLDN (433 aa)) folds into the Ketosynthase family 3 (KS3) domain. Active-site for beta-ketoacyl synthase activity residues include Cys-192, His-331, and His-371. The segment at 586 to 883 (FVFTGQGAQW…EIGPSAALGG (298 aa)) is malonyl-CoA:ACP transacylase (MAT) domain. The For malonyltransferase activity role is filled by Ser-682. Residues 979–1125 (HDLLGGKVLG…GLVRLALNAS (147 aa)) form an N-terminal hotdog fold region. Residues 979-1291 (HDLLGGKVLG…LRGISMTSVG (313 aa)) form a dehydratase (DH) domain region. One can recognise a PKS/mFAS DH domain in the interval 979-1296 (HDLLGGKVLG…MTSVGLQGNV (318 aa)). The For beta-hydroxyacyl dehydratase activity role is filled by His-1011. The tract at residues 1141–1296 (QYPTPARFWY…MTSVGLQGNV (156 aa)) is C-terminal hotdog fold. Residues 1724–2037 (GILDTLHFAE…DHNRLRNVVI (314 aa)) are enoylreductase (ER) domain. The interval 2062 to 2301 (PEQTYLLVGK…ITGIAVPQPG (240 aa)) is catalytic ketoreductase (KRc) domain. Residues 2353-2429 (VLLSSAVGVL…VLCQKIISRM (77 aa)) form the Carrier domain. Ser-2389 is subject to O-(pantetheine 4'-phosphoryl)serine.

Its pathway is mycotoxin biosynthesis. Its function is as follows. Highly reducing polyketide synthase; part of the core atranone cluster (CAC) which products are predicted to catalyze most or all steps of mycotoxin atranone synthesis, starting from geranylgeranyl pyrophosphate (GGPP). The initial cyclization of GGPP to dolabellane is probably performed by the terpene cyclase ATR13. The Baeyer-Villiger oxidation near the end of the atranone synthesis, which converts atranones D and E to atranones F and G is predicted to be catalyzed by the monooxygenase ATR8. Of the CAC's other predicted gene products, the reducing PKS ATR6 might synthesize a polyketide chain. This polyketide is probably transferred onto the atranone backbone by the polyketide transferase ATR5. Other predicted CAC products include 4 oxygenases (ATR2, ATR3, ATR4, and ATR14), 3 short-chain reductases (ATR7, ATR9, and ATR10), and a methyltransferase (ATR12). These may all be involved in the various steps of atranone biosynthesis, although their specific roles must await experimental determination. This Stachybotrys chlorohalonatus (strain IBT 40285) protein is Highly reducing polyketide synthase ATR6.